The sequence spans 266 residues: Phosphoethanolamine N-methyltransferase (266 aa).

Residue Gln18 coordinates phosphoethanolamine. Tyr19 is a catalytic residue. Tyr27 contacts phosphoethanolamine. Positions 36, 37, 63, 85, 86, 110, 111, and 127 each coordinate S-adenosyl-L-methionine. His132 is an active-site residue. Residues Tyr160, Tyr175, Arg179, Tyr181, and Lys247 each coordinate phosphoethanolamine.

Belongs to the class I-like SAM-binding methyltransferase superfamily. PEAMT family. In terms of assembly, monomer.

The protein resides in the golgi apparatus membrane. The protein localises to the cytoplasm. The enzyme catalyses phosphoethanolamine + S-adenosyl-L-methionine = N-methylethanolamine phosphate + S-adenosyl-L-homocysteine + H(+). The catalysed reaction is N-methylethanolamine phosphate + S-adenosyl-L-methionine = N,N-dimethylethanolamine phosphate + S-adenosyl-L-homocysteine + H(+). It carries out the reaction N,N-dimethylethanolamine phosphate + S-adenosyl-L-methionine = phosphocholine + S-adenosyl-L-homocysteine + H(+). Its pathway is phospholipid metabolism; phosphatidylcholine biosynthesis; phosphocholine from phosphoethanolamine. Inhibited by phosphocholine. Inhibited by hexadecylphosphocholine (miltefosine). Inhibited by S-adenosyl-l-homocysteine. Weakly inhibited in vitro by amodiaquine, chloroquine and primaquine. Inhibited by NSC-158011. In terms of biological role, catalyzes N-methylation of phosphoethanolamine, phosphomonomethylethanolamine and phosphodimethylethanolamine, the three methylation steps required to convert phosphoethanolamine to phosphocholine. Has no ethanolamine- or phosphatidylethanolamine-N-methyltransferase activity. Required for gametocyte development, maturation and transmission to mosquitoes and for oocyst formation in the mosquito midgut. The polypeptide is Phosphoethanolamine N-methyltransferase (Plasmodium falciparum (isolate 3D7)).